We begin with the raw amino-acid sequence, 904 residues long: Phosphoenolpyruvate carboxylase (904 aa).

Positions 52-71 (ISRRESDAPPSTLSEQLTGR) are disordered. Residues His-151 and Lys-570 contribute to the active site.

Belongs to the PEPCase type 1 family. The cofactor is Mg(2+).

It catalyses the reaction oxaloacetate + phosphate = phosphoenolpyruvate + hydrogencarbonate. Its function is as follows. Forms oxaloacetate, a four-carbon dicarboxylic acid source for the tricarboxylic acid cycle. The protein is Phosphoenolpyruvate carboxylase of Xanthomonas oryzae pv. oryzae (strain MAFF 311018).